Reading from the N-terminus, the 327-residue chain is GMP reductase (327 aa).

Cysteine 176 serves as the catalytic Thioimidate intermediate. 205-228 (IIADGGIRTHGDIAKSIRFGASMV) contributes to the NADP(+) binding site.

It belongs to the IMPDH/GMPR family. GuaC type 2 subfamily.

It carries out the reaction IMP + NH4(+) + NADP(+) = GMP + NADPH + 2 H(+). Catalyzes the irreversible NADPH-dependent deamination of GMP to IMP. It functions in the conversion of nucleobase, nucleoside and nucleotide derivatives of G to A nucleotides, and in maintaining the intracellular balance of A and G nucleotides. The protein is GMP reductase of Streptococcus suis (strain 05ZYH33).